Consider the following 383-residue polypeptide: 8-amino-7-oxononanoate synthase (383 aa).

Arginine 21 contacts substrate. 108–109 (GY) lines the pyridoxal 5'-phosphate pocket. Residue histidine 133 coordinates substrate. Pyridoxal 5'-phosphate contacts are provided by serine 179, histidine 207, and threonine 233. Lysine 236 bears the N6-(pyridoxal phosphate)lysine mark. Threonine 350 provides a ligand contact to substrate.

This sequence belongs to the class-II pyridoxal-phosphate-dependent aminotransferase family. BioF subfamily. Homodimer. Requires pyridoxal 5'-phosphate as cofactor.

The catalysed reaction is 6-carboxyhexanoyl-[ACP] + L-alanine + H(+) = (8S)-8-amino-7-oxononanoate + holo-[ACP] + CO2. Its pathway is cofactor biosynthesis; biotin biosynthesis. Its function is as follows. Catalyzes the decarboxylative condensation of pimeloyl-[acyl-carrier protein] and L-alanine to produce 8-amino-7-oxononanoate (AON), [acyl-carrier protein], and carbon dioxide. In Photorhabdus laumondii subsp. laumondii (strain DSM 15139 / CIP 105565 / TT01) (Photorhabdus luminescens subsp. laumondii), this protein is 8-amino-7-oxononanoate synthase.